The sequence spans 102 residues: NADH-quinone oxidoreductase subunit K (102 aa).

Transmembrane regions (helical) follow at residues 5 to 25 (ALTGMMIVAAGLFAAGVFGVL), 30 to 50 (ILFQLISLEVALSGPALAFIA), and 63 to 83 (MFVLVLTLAAAEVAVGLALFL).

It belongs to the complex I subunit 4L family. As to quaternary structure, NDH-1 is composed of 14 different subunits. Subunits NuoA, H, J, K, L, M, N constitute the membrane sector of the complex.

The protein localises to the cell inner membrane. The enzyme catalyses a quinone + NADH + 5 H(+)(in) = a quinol + NAD(+) + 4 H(+)(out). In terms of biological role, NDH-1 shuttles electrons from NADH, via FMN and iron-sulfur (Fe-S) centers, to quinones in the respiratory chain. The immediate electron acceptor for the enzyme in this species is believed to be ubiquinone. Couples the redox reaction to proton translocation (for every two electrons transferred, four hydrogen ions are translocated across the cytoplasmic membrane), and thus conserves the redox energy in a proton gradient. The protein is NADH-quinone oxidoreductase subunit K of Rhodopseudomonas palustris (strain BisB18).